The primary structure comprises 65 residues: DNA gyrase inhibitor YacG (65 aa).

Cys9, Cys12, Cys28, and Cys32 together coordinate Zn(2+). The disordered stretch occupies residues 45-65 (KRIPSSGDLSESDDWSEEPKQ). Residues 54-65 (SESDDWSEEPKQ) show a composition bias toward acidic residues.

This sequence belongs to the DNA gyrase inhibitor YacG family. As to quaternary structure, interacts with GyrB. It depends on Zn(2+) as a cofactor.

Inhibits all the catalytic activities of DNA gyrase by preventing its interaction with DNA. Acts by binding directly to the C-terminal domain of GyrB, which probably disrupts DNA binding by the gyrase. This Shigella boydii serotype 18 (strain CDC 3083-94 / BS512) protein is DNA gyrase inhibitor YacG.